The primary structure comprises 78 residues: Glycophorin-E (78 aa).

The N-terminal stretch at 1–19 (MYGKIIFVLLLSGIVSISA) is a signal peptide. Topologically, residues 20–52 (SSTTGVAMHTSTSSSVTKSYISSQTNGITLINW) are extracellular. The helical transmembrane segment at 53–73 (WAMARVIFEVMLVVVGMIILI) threads the bilayer. Residues 74–78 (SYCIR) lie on the Cytoplasmic side of the membrane.

Belongs to the glycophorin-A family. The N-terminal extracellular domain is heavily glycosylated on serine and threonine residues. As to expression, erythrocytes.

Its subcellular location is the membrane. Functionally, this protein is a minor sialoglycoprotein in human erythrocyte membranes. This Homo sapiens (Human) protein is Glycophorin-E (GYPE).